Consider the following 351-residue polypeptide: Protein RecA (351 aa).

73 to 80 serves as a coordination point for ATP; sequence GPESSGKT.

This sequence belongs to the RecA family.

The protein resides in the cytoplasm. In terms of biological role, can catalyze the hydrolysis of ATP in the presence of single-stranded DNA, the ATP-dependent uptake of single-stranded DNA by duplex DNA, and the ATP-dependent hybridization of homologous single-stranded DNAs. It interacts with LexA causing its activation and leading to its autocatalytic cleavage. The protein is Protein RecA of Herbaspirillum seropedicae.